Consider the following 330-residue polypeptide: Ketol-acid reductoisomerase (NADP(+)) (330 aa).

Residues 1–181 (MKVFYDSDFK…GLSRAGVIQT (181 aa)) form the KARI N-terminal Rossmann domain. NADP(+) contacts are provided by residues 24 to 27 (YGSQ), Arg47, Ser52, and 82 to 85 (DELQ). Residue His107 is part of the active site. An NADP(+)-binding site is contributed by Gly133. Residues 182–327 (TFKEETETDL…AKLRKMCGLE (146 aa)) form the KARI C-terminal knotted domain. Asp190, Glu194, Glu226, and Glu230 together coordinate Mg(2+). Residue Ser251 coordinates substrate.

This sequence belongs to the ketol-acid reductoisomerase family. Requires Mg(2+) as cofactor.

The enzyme catalyses (2R)-2,3-dihydroxy-3-methylbutanoate + NADP(+) = (2S)-2-acetolactate + NADPH + H(+). It catalyses the reaction (2R,3R)-2,3-dihydroxy-3-methylpentanoate + NADP(+) = (S)-2-ethyl-2-hydroxy-3-oxobutanoate + NADPH + H(+). Its pathway is amino-acid biosynthesis; L-isoleucine biosynthesis; L-isoleucine from 2-oxobutanoate: step 2/4. It functions in the pathway amino-acid biosynthesis; L-valine biosynthesis; L-valine from pyruvate: step 2/4. In terms of biological role, involved in the biosynthesis of branched-chain amino acids (BCAA). Catalyzes an alkyl-migration followed by a ketol-acid reduction of (S)-2-acetolactate (S2AL) to yield (R)-2,3-dihydroxy-isovalerate. In the isomerase reaction, S2AL is rearranged via a Mg-dependent methyl migration to produce 3-hydroxy-3-methyl-2-ketobutyrate (HMKB). In the reductase reaction, this 2-ketoacid undergoes a metal-dependent reduction by NADPH to yield (R)-2,3-dihydroxy-isovalerate. In Methanococcus maripaludis (strain C5 / ATCC BAA-1333), this protein is Ketol-acid reductoisomerase (NADP(+)).